The following is a 212-amino-acid chain: Thymidylate kinase (212 aa).

11-18 (GMEGAGKS) lines the ATP pocket.

Belongs to the thymidylate kinase family.

It catalyses the reaction dTMP + ATP = dTDP + ADP. Its function is as follows. Phosphorylation of dTMP to form dTDP in both de novo and salvage pathways of dTTP synthesis. The polypeptide is Thymidylate kinase (Colwellia psychrerythraea (strain 34H / ATCC BAA-681) (Vibrio psychroerythus)).